We begin with the raw amino-acid sequence, 144 residues long: Interleukin-3 (144 aa).

The N-terminal stretch at 1-17 (MSSLSILHLLLLLLALH) is a signal peptide.

It belongs to the IL-3 family. As to quaternary structure, monomer.

The protein resides in the secreted. In terms of biological role, granulocyte/macrophage colony-stimulating factors are cytokines that act in hematopoiesis by controlling the production, differentiation, and function of 2 related white cell populations of the blood, the granulocytes and the monocytes-macrophages. Its function is as follows. This CSF induces granulocytes, macrophages, mast cells, stem cells, erythroid cells, eosinophils and megakaryocytes. The protein is Interleukin-3 (IL3) of Bos taurus (Bovine).